A 1076-amino-acid chain; its full sequence is Cytadherence high molecular weight protein 3 (1076 aa).

The fibronectin-binding stretch occupies residues 264 to 284; it reads QGYDQGYDQQYDQQGYDQQGY. Positions 326 to 335 are enriched in low complexity; that stretch reads QQPVEVAKPA. Residues 326-351 are disordered; the sequence is QQPVEVAKPAPTKPVGPKPQPGKKAT. Over residues 336–345 the composition is skewed to pro residues; the sequence is PTKPVGPKPQ. Residues 562 to 616 are a coiled coil; the sequence is EITKLEELVEIKTDNTESLNKLETLIDENKKIIDQFKQLKEEAKKSNSNINLEKV. Disordered stretches follow at residues 789–808 and 850–873; these read SREH…TTRI and RINP…EQQP. Over residues 797-806 the composition is skewed to polar residues; the sequence is PKAQHQQPTT. Positions 862-873 are enriched in low complexity; that stretch reads YEQPDPYQEQQP.

The protein localises to the cell projection. It localises to the attachment organelle membrane. Its function is as follows. Binds immobilized fibronectin. Functionally, component of the cytoskeleton-like structure which stabilizes the shape of the wall-less mycoplasma. This cytoskeleton-like network of accessory proteins containing HMW proteins 1 to 5 allows the proper anchoring of cytadhesin proteins in the mycoplasmal membrane at the attachment organelle. Essential for successful surface parasitism. This is Cytadherence high molecular weight protein 3 (hlp3) from Mycoplasmoides gallisepticum (strain R(low / passage 15 / clone 2)) (Mycoplasma gallisepticum).